Reading from the N-terminus, the 535-residue chain is GMP synthase [glutamine-hydrolyzing] (535 aa).

One can recognise a Glutamine amidotransferase type-1 domain in the interval 24–217 (KILIVDFGSQ…VRNISGLGGD (194 aa)). Cys-101 (nucleophile) is an active-site residue. Active-site residues include His-191 and Glu-193. Positions 218–410 (WTMHAFREEE…LGLPDVFVGR (193 aa)) constitute a GMPS ATP-PPase domain. An ATP-binding site is contributed by 245 to 251 (SGGVDSA).

Homodimer.

The catalysed reaction is XMP + L-glutamine + ATP + H2O = GMP + L-glutamate + AMP + diphosphate + 2 H(+). The protein operates within purine metabolism; GMP biosynthesis; GMP from XMP (L-Gln route): step 1/1. Its function is as follows. Catalyzes the synthesis of GMP from XMP. This Bradyrhizobium sp. (strain ORS 278) protein is GMP synthase [glutamine-hydrolyzing].